We begin with the raw amino-acid sequence, 590 residues long: Proline--tRNA ligase (590 aa).

The protein belongs to the class-II aminoacyl-tRNA synthetase family. ProS type 1 subfamily. Homodimer.

The protein localises to the cytoplasm. It catalyses the reaction tRNA(Pro) + L-proline + ATP = L-prolyl-tRNA(Pro) + AMP + diphosphate. Catalyzes the attachment of proline to tRNA(Pro) in a two-step reaction: proline is first activated by ATP to form Pro-AMP and then transferred to the acceptor end of tRNA(Pro). As ProRS can inadvertently accommodate and process non-cognate amino acids such as alanine and cysteine, to avoid such errors it has two additional distinct editing activities against alanine. One activity is designated as 'pretransfer' editing and involves the tRNA(Pro)-independent hydrolysis of activated Ala-AMP. The other activity is designated 'posttransfer' editing and involves deacylation of mischarged Ala-tRNA(Pro). The misacylated Cys-tRNA(Pro) is not edited by ProRS. The polypeptide is Proline--tRNA ligase (Clavibacter sepedonicus (Clavibacter michiganensis subsp. sepedonicus)).